Here is a 218-residue protein sequence, read N- to C-terminus: UPF0319 protein swp_2242 (218 aa).

The signal sequence occupies residues 1 to 21; that stretch reads MRLSQSVLTALLICVNSAAFA.

Belongs to the UPF0319 family.

This chain is UPF0319 protein swp_2242, found in Shewanella piezotolerans (strain WP3 / JCM 13877).